A 628-amino-acid chain; its full sequence is F-box only protein 21 (628 aa).

The F-box domain maps to 28-84 (SCLVNLPGEVLEYILCCGSLTAADIGRVSSTCRRLRELCQSSGKVWKEQFRVRWPSL).

As to quaternary structure, directly interacts with SKP1 and CUL1.

Its function is as follows. Substrate-recognition component of the SCF (SKP1-CUL1-F-box protein)-type E3 ubiquitin ligase complex. The polypeptide is F-box only protein 21 (FBXO21) (Homo sapiens (Human)).